We begin with the raw amino-acid sequence, 197 residues long: Thymidylate kinase (197 aa).

7-14 is a binding site for ATP; it reads GIDGSGKS.

Belongs to the thymidylate kinase family.

It carries out the reaction dTMP + ATP = dTDP + ADP. Its function is as follows. Phosphorylation of dTMP to form dTDP in both de novo and salvage pathways of dTTP synthesis. The protein is Thymidylate kinase of Thermotoga petrophila (strain ATCC BAA-488 / DSM 13995 / JCM 10881 / RKU-1).